Consider the following 309-residue polypeptide: MTISQTVPRGAVAVRRRRRIRISTVVWFTMPAAAIMLLVLGVPLVYSFYYSLTGWSLVVPGSDQDFIGLLNYTDVLRSSEFWAAIRVTLIYAVVAVSLECALGILFAVLLNLEFFGRGLFRSLMLIPMVITPAVVGIFWKLLYEQDSGVFNYLLGTLGFEPVPWLSLTVALASVIIVDVWQSTPFFTLIILAGLQSLDRDTVSAAQADGANALQVFRYLTLPHLVPYIMIAAAFRIIGVMADFDKIFLLTLGGPGNVTTTLSVYAYNTGFKVFDIGRTTAISWIYVVFVLAISAPLIWRLFRGASVNRH.

7 consecutive transmembrane segments (helical) span residues 25 to 45 (VVWFTMPAAAIMLLVLGVPLV), 89 to 109 (LIYAVVAVSLECALGILFAVL), 123 to 143 (LMLIPMVITPAVVGIFWKLLY), 174 to 194 (VIIVDVWQSTPFFTLIILAGL), 221 to 241 (LPHLVPYIMIAAAFRIIGVMA), 246 to 266 (IFLLTLGGPGNVTTTLSVYAY), and 278 to 298 (TTAISWIYVVFVLAISAPLIW). Positions 85 to 296 (IRVTLIYAVV…VFVLAISAPL (212 aa)) constitute an ABC transmembrane type-1 domain.

It belongs to the binding-protein-dependent transport system permease family. MalFG subfamily.

The protein localises to the cell inner membrane. Its function is as follows. Probably part of the binding-protein-dependent transport system y4oPQRS. This system probably transports a sugar-like molecule. Probably responsible for the translocation of the substrate across the membrane. The chain is Probable ABC transporter permease protein y4oQ from Sinorhizobium fredii (strain NBRC 101917 / NGR234).